Reading from the N-terminus, the 154-residue chain is Putative pre-16S rRNA nuclease (154 aa).

The protein belongs to the YqgF nuclease family.

Its subcellular location is the cytoplasm. In terms of biological role, could be a nuclease involved in processing of the 5'-end of pre-16S rRNA. The protein is Putative pre-16S rRNA nuclease of Rickettsia peacockii (strain Rustic).